Consider the following 132-residue polypeptide: MSVSDPIGDMLTRIRNAVGRKKTKVSTPASKLRARVLDVLQSEGYIRGYTQSEFVNGKAEIEIELKYYEGVPVIRELTRVSKPGRRVYVSVKSIPQVANGLGISILSTPKGVMADHEAREQNVGGELLCRIF.

Belongs to the universal ribosomal protein uS8 family. In terms of assembly, part of the 30S ribosomal subunit. Contacts proteins S5 and S12.

Functionally, one of the primary rRNA binding proteins, it binds directly to 16S rRNA central domain where it helps coordinate assembly of the platform of the 30S subunit. This chain is Small ribosomal subunit protein uS8, found in Brucella anthropi (strain ATCC 49188 / DSM 6882 / CCUG 24695 / JCM 21032 / LMG 3331 / NBRC 15819 / NCTC 12168 / Alc 37) (Ochrobactrum anthropi).